The following is a 130-amino-acid chain: L-ectoine synthase (130 aa).

The protein belongs to the ectoine synthase family.

It catalyses the reaction (2S)-4-acetamido-2-aminobutanoate = L-ectoine + H2O. Its pathway is amine and polyamine biosynthesis; ectoine biosynthesis; L-ectoine from L-aspartate 4-semialdehyde: step 3/3. Catalyzes the circularization of gamma-N-acetyl-alpha,gamma-diaminobutyric acid (ADABA) to ectoine (1,4,5,6-tetrahydro-2-methyl-4-pyrimidine carboxylic acid), which is an excellent osmoprotectant. In Desulfatibacillum aliphaticivorans, this protein is L-ectoine synthase.